The primary structure comprises 257 residues: Adenylate kinase (257 aa).

52–57 is an ATP binding site; that stretch reads GAGKGT. The NMP stretch occupies residues 72-101; it reads ATGDMLRSQVAKKTELGKEAKKIMDQGGLV. AMP contacts are provided by residues Thr73, Arg78, 99–101, 128–131, and Gln135; these read GLV and GFPR. The segment at 169 to 206 is LID; it reads GRLVHPASGRSYHKIFNPPKNDMKDDVTGEPLIQRSDD. Residues Arg170 and 179 to 180 each bind ATP; that span reads SY. AMP-binding residues include Arg203 and Arg214. Position 242 (Gln242) interacts with ATP.

The protein belongs to the adenylate kinase family. AK2 subfamily. As to quaternary structure, monomer.

It is found in the cytoplasm. It localises to the cytosol. Its subcellular location is the mitochondrion intermembrane space. The catalysed reaction is AMP + ATP = 2 ADP. Functionally, catalyzes the reversible transfer of the terminal phosphate group between ATP and AMP. Plays an important role in cellular energy homeostasis and in adenine nucleotide metabolism. Adenylate kinase activity is critical for regulation of the phosphate utilization and the AMP de novo biosynthesis pathways. The chain is Adenylate kinase (adk1) from Aspergillus fumigatus (strain CBS 144.89 / FGSC A1163 / CEA10) (Neosartorya fumigata).